The chain runs to 364 residues: Serpentine receptor class epsilon-27 (364 aa).

7 helical membrane-spanning segments follow: residues 31–51 (VIAS…VVSL), 64–84 (FIIL…GKLI), 125–145 (LLII…FGAV), 167–187 (IFIP…CSCL), 195–215 (IITI…VFFL), 257–277 (LIFS…TLLL), and 290–310 (NALF…IPAW).

This sequence belongs to the nematode receptor-like protein sre family.

Its subcellular location is the membrane. This is Serpentine receptor class epsilon-27 (sre-27) from Caenorhabditis elegans.